The primary structure comprises 188 residues: Elongation factor P (188 aa).

N6-(3,6-diaminohexanoyl)-5-hydroxylysine is present on lysine 34.

Belongs to the elongation factor P family. May be beta-lysylated on the epsilon-amino group of Lys-34 by the combined action of EpmA and EpmB, and then hydroxylated on the C5 position of the same residue by EpmC (if this protein is present). Lysylation is critical for the stimulatory effect of EF-P on peptide-bond formation. The lysylation moiety may extend toward the peptidyltransferase center and stabilize the terminal 3-CCA end of the tRNA. Hydroxylation of the C5 position on Lys-34 may allow additional potential stabilizing hydrogen-bond interactions with the P-tRNA.

The protein localises to the cytoplasm. It participates in protein biosynthesis; polypeptide chain elongation. Functionally, involved in peptide bond synthesis. Alleviates ribosome stalling that occurs when 3 or more consecutive Pro residues or the sequence PPG is present in a protein, possibly by augmenting the peptidyl transferase activity of the ribosome. Modification of Lys-34 is required for alleviation. This Serratia proteamaculans (strain 568) protein is Elongation factor P.